A 526-amino-acid chain; its full sequence is Flavonoid 3'-monooxygenase CYP75B3 (526 aa).

The chain crosses the membrane as a helical span at residues 6-26 (LPLLLGSLAVSAAVWYLVYFL). Cysteine 461 contacts heme.

This sequence belongs to the cytochrome P450 family. The cofactor is heme.

Its subcellular location is the membrane. It catalyses the reaction a 3'-unsubstituted flavone + reduced [NADPH--hemoprotein reductase] + O2 = a 3'-hydroxyflavone + oxidized [NADPH--hemoprotein reductase] + H2O + H(+). Its pathway is secondary metabolite biosynthesis; flavonoid biosynthesis. Functionally, catalyzes the 3'-hydroxylation of the flavonoid B-ring to the 3',4'-hydroxylated state. Catalyzes the 3'-hydroxylation of apigenin to generate luteolin. This is Flavonoid 3'-monooxygenase CYP75B3 from Oryza sativa subsp. japonica (Rice).